Here is a 384-residue protein sequence, read N- to C-terminus: S-adenosylmethionine synthase (384 aa).

Residue His-15 coordinates ATP. A Mg(2+)-binding site is contributed by Asp-17. Glu-43 provides a ligand contact to K(+). Residues Glu-56 and Gln-99 each coordinate L-methionine. Residues 99–109 (QSPDINQGVDR) are flexible loop. ATP contacts are provided by residues 164–166 (DAK), 230–231 (RF), Asp-239, 245–246 (RK), Ala-262, and Lys-266. Asp-239 provides a ligand contact to L-methionine. Residue Lys-270 coordinates L-methionine.

It belongs to the AdoMet synthase family. Homotetramer; dimer of dimers. The cofactor is Mg(2+). K(+) serves as cofactor.

Its subcellular location is the cytoplasm. The catalysed reaction is L-methionine + ATP + H2O = S-adenosyl-L-methionine + phosphate + diphosphate. It functions in the pathway amino-acid biosynthesis; S-adenosyl-L-methionine biosynthesis; S-adenosyl-L-methionine from L-methionine: step 1/1. Catalyzes the formation of S-adenosylmethionine (AdoMet) from methionine and ATP. The overall synthetic reaction is composed of two sequential steps, AdoMet formation and the subsequent tripolyphosphate hydrolysis which occurs prior to release of AdoMet from the enzyme. In Cronobacter sakazakii (strain ATCC BAA-894) (Enterobacter sakazakii), this protein is S-adenosylmethionine synthase.